Here is a 469-residue protein sequence, read N- to C-terminus: Putative dipeptidase SE_1424 (469 aa).

Position 84 (His84) interacts with Zn(2+). Asp86 is an active-site residue. Asp115 serves as a coordination point for Zn(2+). The active-site Proton acceptor is Glu149. Zn(2+)-binding residues include Glu150, Asp173, and His440.

This sequence belongs to the peptidase M20A family. Zn(2+) is required as a cofactor.

This chain is Putative dipeptidase SE_1424, found in Staphylococcus epidermidis (strain ATCC 12228 / FDA PCI 1200).